The sequence spans 368 residues: 4-hydroxy-3-methylbut-2-en-1-yl diphosphate synthase (flavodoxin) (368 aa).

4 residues coordinate [4Fe-4S] cluster: Cys-271, Cys-274, Cys-306, and Glu-313.

The protein belongs to the IspG family. The cofactor is [4Fe-4S] cluster.

It catalyses the reaction (2E)-4-hydroxy-3-methylbut-2-enyl diphosphate + oxidized [flavodoxin] + H2O + 2 H(+) = 2-C-methyl-D-erythritol 2,4-cyclic diphosphate + reduced [flavodoxin]. It participates in isoprenoid biosynthesis; isopentenyl diphosphate biosynthesis via DXP pathway; isopentenyl diphosphate from 1-deoxy-D-xylulose 5-phosphate: step 5/6. Functionally, converts 2C-methyl-D-erythritol 2,4-cyclodiphosphate (ME-2,4cPP) into 1-hydroxy-2-methyl-2-(E)-butenyl 4-diphosphate. The chain is 4-hydroxy-3-methylbut-2-en-1-yl diphosphate synthase (flavodoxin) from Buchnera aphidicola subsp. Acyrthosiphon pisum (strain APS) (Acyrthosiphon pisum symbiotic bacterium).